A 31-amino-acid polypeptide reads, in one-letter code: Cytochrome b6-f complex subunit 6 (31 aa).

A helical membrane pass occupies residues 4-24 (ITSYFGFLLAALTITSALFIG).

The protein belongs to the PetL family. As to quaternary structure, the 4 large subunits of the cytochrome b6-f complex are cytochrome b6, subunit IV (17 kDa polypeptide, PetD), cytochrome f and the Rieske protein, while the 4 small subunits are PetG, PetL, PetM and PetN. The complex functions as a dimer.

Its subcellular location is the plastid. The protein resides in the chloroplast thylakoid membrane. Functionally, component of the cytochrome b6-f complex, which mediates electron transfer between photosystem II (PSII) and photosystem I (PSI), cyclic electron flow around PSI, and state transitions. PetL is important for photoautotrophic growth as well as for electron transfer efficiency and stability of the cytochrome b6-f complex. The polypeptide is Cytochrome b6-f complex subunit 6 (Solanum tuberosum (Potato)).